The chain runs to 315 residues: D-alanine--D-alanine ligase (315 aa).

In terms of domain architecture, ATP-grasp spans 101–297 (KHIFRSLNID…FNELVKIIIE (197 aa)). 128-181 (KIDYPYVLKPINEGSSIGVYIIFSHEDYLELKNNSSTIMEKMIVEEYIPGIELH) lines the ATP pocket. The Mg(2+) site is built by D249, E263, and N265.

This sequence belongs to the D-alanine--D-alanine ligase family. Mg(2+) is required as a cofactor. The cofactor is Mn(2+).

The protein resides in the cytoplasm. It carries out the reaction 2 D-alanine + ATP = D-alanyl-D-alanine + ADP + phosphate + H(+). It functions in the pathway cell wall biogenesis; peptidoglycan biosynthesis. Functionally, cell wall formation. The chain is D-alanine--D-alanine ligase from Wolbachia pipientis wMel.